The primary structure comprises 201 residues: Holliday junction branch migration complex subunit RuvA (201 aa).

A domain I region spans residues Met-1–Ala-64. Residues Ser-65–Gly-143 are domain II. Residues Gly-144 to Ala-153 form a flexible linker region. The segment at Ala-153–Lys-201 is domain III.

This sequence belongs to the RuvA family. Homotetramer. Forms an RuvA(8)-RuvB(12)-Holliday junction (HJ) complex. HJ DNA is sandwiched between 2 RuvA tetramers; dsDNA enters through RuvA and exits via RuvB. An RuvB hexamer assembles on each DNA strand where it exits the tetramer. Each RuvB hexamer is contacted by two RuvA subunits (via domain III) on 2 adjacent RuvB subunits; this complex drives branch migration. In the full resolvosome a probable DNA-RuvA(4)-RuvB(12)-RuvC(2) complex forms which resolves the HJ.

Its subcellular location is the cytoplasm. Its function is as follows. The RuvA-RuvB-RuvC complex processes Holliday junction (HJ) DNA during genetic recombination and DNA repair, while the RuvA-RuvB complex plays an important role in the rescue of blocked DNA replication forks via replication fork reversal (RFR). RuvA specifically binds to HJ cruciform DNA, conferring on it an open structure. The RuvB hexamer acts as an ATP-dependent pump, pulling dsDNA into and through the RuvAB complex. HJ branch migration allows RuvC to scan DNA until it finds its consensus sequence, where it cleaves and resolves the cruciform DNA. The polypeptide is Holliday junction branch migration complex subunit RuvA (Thioalkalivibrio sulfidiphilus (strain HL-EbGR7)).